We begin with the raw amino-acid sequence, 183 residues long: MKLAVIAKPYANAIFELAQQDNSHLQWKMVLDVGAYLLLDKKMRRLIASPNILEQDKLSTIKALLMSILNRELDAHEAMFISVLLDNNRIGILPSIATLFESLINITNNIKIFTIISSYQLSKSEKEQIVSDLMNQYNKTVSIDIVVDKDLVGGVIIKDGDKVIDISIKARVDELGLRLSKTH.

This sequence belongs to the ATPase delta chain family. F-type ATPases have 2 components, F(1) - the catalytic core - and F(0) - the membrane proton channel. F(1) has five subunits: alpha(3), beta(3), gamma(1), delta(1), epsilon(1). F(0) has three main subunits: a(1), b(2) and c(10-14). The alpha and beta chains form an alternating ring which encloses part of the gamma chain. F(1) is attached to F(0) by a central stalk formed by the gamma and epsilon chains, while a peripheral stalk is formed by the delta and b chains.

Its subcellular location is the cell inner membrane. In terms of biological role, f(1)F(0) ATP synthase produces ATP from ADP in the presence of a proton or sodium gradient. F-type ATPases consist of two structural domains, F(1) containing the extramembraneous catalytic core and F(0) containing the membrane proton channel, linked together by a central stalk and a peripheral stalk. During catalysis, ATP synthesis in the catalytic domain of F(1) is coupled via a rotary mechanism of the central stalk subunits to proton translocation. Its function is as follows. This protein is part of the stalk that links CF(0) to CF(1). It either transmits conformational changes from CF(0) to CF(1) or is implicated in proton conduction. The polypeptide is ATP synthase subunit delta (Vesicomyosocius okutanii subsp. Calyptogena okutanii (strain HA)).